A 617-amino-acid polypeptide reads, in one-letter code: 1-deoxy-D-xylulose-5-phosphate synthase (617 aa).

Thiamine diphosphate contacts are provided by residues His-76 and 117–119; that span reads GHS. Asp-148 serves as a coordination point for Mg(2+). Thiamine diphosphate-binding positions include 149 to 150, Asn-177, Tyr-285, and Glu-366; that span reads GA. Residue Asn-177 coordinates Mg(2+).

This sequence belongs to the transketolase family. DXPS subfamily. Homodimer. Mg(2+) is required as a cofactor. Thiamine diphosphate serves as cofactor.

The enzyme catalyses D-glyceraldehyde 3-phosphate + pyruvate + H(+) = 1-deoxy-D-xylulose 5-phosphate + CO2. It functions in the pathway metabolic intermediate biosynthesis; 1-deoxy-D-xylulose 5-phosphate biosynthesis; 1-deoxy-D-xylulose 5-phosphate from D-glyceraldehyde 3-phosphate and pyruvate: step 1/1. Its function is as follows. Catalyzes the acyloin condensation reaction between C atoms 2 and 3 of pyruvate and glyceraldehyde 3-phosphate to yield 1-deoxy-D-xylulose-5-phosphate (DXP). This is 1-deoxy-D-xylulose-5-phosphate synthase from Histophilus somni (strain 2336) (Haemophilus somnus).